Here is a 166-residue protein sequence, read N- to C-terminus: Nucleotide-binding protein Acid_3194 (166 aa).

The protein belongs to the YajQ family.

In terms of biological role, nucleotide-binding protein. In Solibacter usitatus (strain Ellin6076), this protein is Nucleotide-binding protein Acid_3194.